We begin with the raw amino-acid sequence, 359 residues long: Cytokine receptor-like factor 2 (359 aa).

A signal peptide spans 1-19 (MAWALAVILLPRLLAAAAA). The Extracellular segment spans residues 20–232 (AAAVTSRGDV…PAPSPALAPP (213 aa)). A glycan (N-linked (GlcNAc...) asparagine) is linked at asparagine 53. The cysteines at positions 68 and 82 are disulfide-linked. The region spanning 119 to 213 (PPWNVTLLWT…WTAVTRLSGA (95 aa)) is the Fibronectin type-III domain. An N-linked (GlcNAc...) asparagine glycan is attached at asparagine 122. Intrachain disulfides connect cysteine 168–cysteine 169 and cysteine 181–cysteine 219. The WSXWS motif signature appears at 201–205 (PSEWT). The helical transmembrane segment at 233 to 253 (LLPLGCGLAALLTLSLLLAAL) threads the bilayer. The Cytoplasmic portion of the chain corresponds to 254–359 (RLRRVKDALL…MVGDSGYMTL (106 aa)). Residues 262-270 (LLPCVPDPS) carry the Box 1 motif motif. Residues 312 to 336 (KRVEPEDGTSLCTVPRPPSFEPRGP) form a disordered region.

It belongs to the type I cytokine receptor family. Type 5 subfamily. The TSLP receptor is a heterodimer of CRLF2 and IL7R. Binding of TSLP to CRLF2/TSLPR is a mechanistic prerequisite for recruitment of IL7R to the high-affinity ternary complex. High level of expression in liver, lung and testis. Also expressed in heart, brain, spleen, thymus and bone marrow. Highly expressed in progenitors and myeloid cells. Isoform 2 is expressed in primary hemotopoietic cells.

The protein resides in the cell membrane. The protein localises to the secreted. Receptor for thymic stromal lymphopoietin (TSLP). Forms a functional complex with TSLP and IL7R which is capable of stimulating cell proliferation through activation of STAT3 and STAT5. Also activates JAK2. Implicated in the development of the hematopoietic system. The protein is Cytokine receptor-like factor 2 (Crlf2) of Mus musculus (Mouse).